Here is a 232-residue protein sequence, read N- to C-terminus: MAKLTKRQKAIREKVQAGKAYSVEEAVALLTELSAPVKFKESIDVSVNLGVDARKSDQVVRSSTVLPNGTGKTVRVAVFTQGANADKAKAAGADIVGMDDLAEEVKKGNLDFDVVIATPDAMRVVGQLGQILGPRGLMPNPKVGTVTADVEAAVNNAKAGQIRYRTDKNGIIHAPLGNVEFSAEHIKQNLEALIADLKKIKPSSAKGVYLKKVTLSSTMGPGLLIDQNSLAV.

It belongs to the universal ribosomal protein uL1 family. In terms of assembly, part of the 50S ribosomal subunit.

Its function is as follows. Binds directly to 23S rRNA. The L1 stalk is quite mobile in the ribosome, and is involved in E site tRNA release. In terms of biological role, protein L1 is also a translational repressor protein, it controls the translation of the L11 operon by binding to its mRNA. The sequence is that of Large ribosomal subunit protein uL1 from Hahella chejuensis (strain KCTC 2396).